Reading from the N-terminus, the 363-residue chain is Type-2 angiotensin II receptor (363 aa).

Residues 1–45 (MKDNFSFAATSRNITSSRPFDNLNATGTNESAFNCSHKPSDKHLE) are Extracellular-facing. N-linked (GlcNAc...) asparagine glycans are attached at residues asparagine 4, asparagine 13, asparagine 24, asparagine 29, and asparagine 34. 2 disulfides stabilise this stretch: cysteine 35–cysteine 290 and cysteine 117–cysteine 195. The chain crosses the membrane as a helical span at residues 46–70 (AIPVLYYMIFVIGFAVNIVVVSLFC). At 71–80 (CQKGPKKVSS) the chain is on the cytoplasmic side. A helical transmembrane segment spans residues 81-104 (IYIFNLALADLLLLATLPLWATYY). The angiotensin II site is built by tyrosine 103 and tyrosine 104. Topologically, residues 105–114 (SYRYDWLFGP) are extracellular. A helical transmembrane segment spans residues 115-140 (VMCKVFGSFLTLNMFASIFFITCMSV). Residues 141 to 159 (DRYQSVIYPFLSQRRNPWQ) lie on the Cytoplasmic side of the membrane. The chain crosses the membrane as a helical span at residues 160 to 181 (ASYVVPLVWCMACLSSLPTFYF). Angiotensin II contacts are provided by arginine 182, tyrosine 204, and lysine 215. Residues 182 to 206 (RDVRTIEYLGVNACIMAFPPEKYAQ) are Extracellular-facing. Residues 207–232 (WSAGIALMKNILGFIIPLIFIATCYF) traverse the membrane as a helical segment. Topologically, residues 233–257 (GIRKHLLKTNSYGKNRITRDQVLKM) are cytoplasmic. A helical transmembrane segment spans residues 258–281 (AAAVVLAFIICWLPFHVLTFLDAL). Aspartate 279 provides a ligand contact to angiotensin II. The Extracellular portion of the chain corresponds to 282 to 294 (TWMGIINSCEVIA). A helical transmembrane segment spans residues 295–320 (VIDLALPFAILLGFTNSCVNPFLYCF). Residue aspartate 297 coordinates angiotensin II. Over 321-363 (VGNRFQQKLRSVFRVPITWLQGKRETMSCRKGSSLREMDTFVS) the chain is Cytoplasmic. Positions 324–333 (RFQQKLRSVF) are helix VIII. A Phosphoserine; by PKC modification is found at serine 354.

The protein belongs to the G-protein coupled receptor 1 family. As to quaternary structure, interacts with MTUS1. As to expression, expressed at highest levels in adrenal gland and uterus.

It is found in the cell membrane. Receptor for angiotensin II, a vasoconstricting peptide. Signals primarily via a non-canonical G-protein- and beta-arrestin independent pathways. Cooperates with MTUS1 to inhibit ERK2 activation and cell proliferation. The chain is Type-2 angiotensin II receptor from Mus musculus (Mouse).